A 519-amino-acid chain; its full sequence is AAA-ATPase At4g30250 (519 aa).

Positions 1–24 (MSDYWTTMASLLGMLAFCQTIVQL) are cleaved as a signal peptide. 252–259 (GPPGTGKS) lines the ATP pocket. Disordered regions lie at residues 315-335 (GKNK…NGSG) and 467-519 (KSVG…EKEK). The span at 479–488 (QEEEEEAEEE) shows a compositional bias: acidic residues. Positions 489-508 (QEKRALDSPNRRNREVCGFR) are enriched in basic and acidic residues. A compositionally biased stretch (acidic residues) spans 509–519 (EEEEEEDEKEK).

Belongs to the AAA ATPase family. BCS1 subfamily. It depends on Mg(2+) as a cofactor.

The enzyme catalyses ATP + H2O = ADP + phosphate + H(+). This is AAA-ATPase At4g30250 from Arabidopsis thaliana (Mouse-ear cress).